A 68-amino-acid chain; its full sequence is U-actitoxin-Avt1 (68 aa).

A signal peptide spans M1–A22. The propeptide occupies T23–R40. The interval Y24 to S50 is disordered. The span at P32–S41 shows a compositional bias: basic and acidic residues. 3 disulfide bridges follow: C42–C54, C46–C59, and C52–C66.

In terms of biological role, stable protein with probable toxin activity. Does not show activity on all channels tested. Shows no hemolytic activity on rat erythrocytes. The chain is U-actitoxin-Avt1 from Aulactinia veratra (Green snakelock anemone).